A 158-amino-acid chain; its full sequence is Large ribosomal subunit protein eL24 (158 aa).

Over residues 98–146 (LDASHKKAEAEKAVRELKQKKANDIEKKRADRKLQGKDVKAAKKAETKK) the composition is skewed to basic and acidic residues. A disordered region spans residues 98-158 (LDASHKKAEA…QPVGAKGGKK (61 aa)).

The protein belongs to the eukaryotic ribosomal protein eL24 family.

This chain is Large ribosomal subunit protein eL24 (RPL24), found in Tetrahymena thermophila (strain SB210).